Consider the following 241-residue polypeptide: tRNA pseudouridine synthase A (241 aa).

The active-site Nucleophile is D52. Y110 is a binding site for substrate.

The protein belongs to the tRNA pseudouridine synthase TruA family. As to quaternary structure, homodimer.

The enzyme catalyses uridine(38/39/40) in tRNA = pseudouridine(38/39/40) in tRNA. Functionally, formation of pseudouridine at positions 38, 39 and 40 in the anticodon stem and loop of transfer RNAs. The sequence is that of tRNA pseudouridine synthase A from Aquifex aeolicus (strain VF5).